We begin with the raw amino-acid sequence, 260 residues long: Metallo-beta-lactamase domain-containing protein 1 (260 aa).

Residues His-118, His-120, Asp-122, His-123, His-173, Asp-196, and His-235 each coordinate Zn(2+).

It belongs to the metallo-beta-lactamase superfamily. Glyoxalase II family. In terms of assembly, homodimer. Zn(2+) serves as cofactor.

It is found in the cytoplasm. The protein localises to the cytosol. It localises to the nucleus. The catalysed reaction is a ribonucleotidyl-ribonucleotide-RNA + H2O = a 3'-end ribonucleotide-RNA + a 5'-end 5'-phospho-ribonucleoside-RNA + H(+). Its function is as follows. Endoribonuclease that catalyzes the hydrolysis of histone-coding pre-mRNA 3'-end. Involved in histone pre-mRNA processing during the S-phase of the cell cycle, which is required for entering/progressing through S-phase. Cleaves histone pre-mRNA at a major and a minor cleavage site after the 5'-ACCCA-3' and the 5'-ACCCACA-3' sequence, respectively, and located downstream of the stem-loop. May require the presence of the HDE element located at the histone pre-RNA 3'-end to avoid non-specific cleavage. The sequence is that of Metallo-beta-lactamase domain-containing protein 1 from Mus musculus (Mouse).